Consider the following 331-residue polypeptide: Homoserine kinase (331 aa).

It belongs to the pseudomonas-type ThrB family.

The enzyme catalyses L-homoserine + ATP = O-phospho-L-homoserine + ADP + H(+). Its pathway is amino-acid biosynthesis; L-threonine biosynthesis; L-threonine from L-aspartate: step 4/5. The protein is Homoserine kinase of Paraburkholderia phytofirmans (strain DSM 17436 / LMG 22146 / PsJN) (Burkholderia phytofirmans).